Here is a 299-residue protein sequence, read N- to C-terminus: Ankyrin repeat domain-containing protein 54 (299 aa).

The disordered stretch occupies residues 1–27; it reads MAATGGGADDESRSGRSSSDGECAVAP. Ala-2 is modified (N-acetylalanine). At Ser-62 the chain carries Phosphoserine. A Nuclear localization signal (NLS) motif is present at residues 98 to 116; sequence RRLGPTGKEVHALKRLRDS. ANK repeat units follow at residues 108 to 137, 141 to 170, 174 to 203, and 207 to 239; these read HALK…DPCA, KGRT…DPNQ, LGNT…RVDA, and AGRT…EVKQ. Residues 140-240 are LYN-binding; the sequence is DKGRTALHFA…EAVRLEVKQI (101 aa). The short motif at 282–292 is the Nuclear export signal (NES) element; it reads LLASFTSLSLQ.

In terms of assembly, interacts (via ankyrin repeat region) with LYN (via SH3-domain) in an activation-independent status of LYN. Forms a multiprotein complex with LYN and HCLS1. Interacts with TSN2, VAV1, DBNL and LASP1. As to expression, expressed in a variety of hemopoietic cell lines and tissue with high levels in testis. Highly expressed in ciliated cells.

It localises to the nucleus. The protein localises to the cytoplasm. Its subcellular location is the midbody. Functionally, plays an important role in regulating intracellular signaling events associated with erythroid terminal differentiation. The protein is Ankyrin repeat domain-containing protein 54 (Ankrd54) of Mus musculus (Mouse).